We begin with the raw amino-acid sequence, 404 residues long: Cysteine desulfurase IscS (404 aa).

Residues 75–76 (AT), N155, Q183, and 203–205 (SGH) contribute to the pyridoxal 5'-phosphate site. K206 carries the post-translational modification N6-(pyridoxal phosphate)lysine. A pyridoxal 5'-phosphate-binding site is contributed by T243. C328 serves as the catalytic Cysteine persulfide intermediate. Residue C328 coordinates [2Fe-2S] cluster.

This sequence belongs to the class-V pyridoxal-phosphate-dependent aminotransferase family. NifS/IscS subfamily. In terms of assembly, homodimer. Forms a heterotetramer with IscU, interacts with other sulfur acceptors. Pyridoxal 5'-phosphate serves as cofactor.

Its subcellular location is the cytoplasm. The enzyme catalyses (sulfur carrier)-H + L-cysteine = (sulfur carrier)-SH + L-alanine. It functions in the pathway cofactor biosynthesis; iron-sulfur cluster biosynthesis. In terms of biological role, master enzyme that delivers sulfur to a number of partners involved in Fe-S cluster assembly, tRNA modification or cofactor biosynthesis. Catalyzes the removal of elemental sulfur atoms from cysteine to produce alanine. Functions as a sulfur delivery protein for Fe-S cluster synthesis onto IscU, an Fe-S scaffold assembly protein, as well as other S acceptor proteins. This is Cysteine desulfurase IscS from Mannheimia succiniciproducens (strain KCTC 0769BP / MBEL55E).